A 583-amino-acid chain; its full sequence is Probable cysteine--tRNA ligase, mitochondrial (583 aa).

Cysteine 82 lines the Zn(2+) pocket. Glycine 83 provides a ligand contact to L-cysteine. The short motif at proline 84–histidine 94 is the 'HIGH' region element. Residue threonine 123 participates in L-cysteine binding. The 'KIIK' region signature appears at lysine 128–asparagine 131. Residues cysteine 271, histidine 296, and glutamate 300 each contribute to the Zn(2+) site. Histidine 296 serves as a coordination point for L-cysteine. A 'KMSKS' region motif is present at residues lysine 337–serine 341. Lysine 340 is a binding site for ATP.

It belongs to the class-I aminoacyl-tRNA synthetase family. Zn(2+) is required as a cofactor.

It localises to the mitochondrion. It carries out the reaction tRNA(Cys) + L-cysteine + ATP = L-cysteinyl-tRNA(Cys) + AMP + diphosphate. In terms of biological role, mitochondrial cysteine-specific aminoacyl-tRNA synthetase that catalyzes the ATP-dependent ligation of cysteine to tRNA(Cys). Its function is as follows. In addition to its role as an aminoacyl-tRNA synthetase, has also cysteine persulfide synthase activity. Produces reactive persulfide species such as cysteine persulfide (CysSSH) from substrate cysteine and mediate direct incorporation of CysSSH into proteins during translations, resulting in protein persulfides and polysulfides. CysSSHs behave as potent antioxidants and cellular protectants. The chain is Probable cysteine--tRNA ligase, mitochondrial (mcysS) from Dictyostelium discoideum (Social amoeba).